We begin with the raw amino-acid sequence, 201 residues long: Testis-expressed protein 38 (201 aa).

The helical transmembrane segment at 3–23 threads the bilayer; that stretch reads ISLCIGFLGLCSVLIGSCILF.

It localises to the membrane. The chain is Testis-expressed protein 38 (Tex38) from Mus musculus (Mouse).